The primary structure comprises 152 residues: SsrA-binding protein (152 aa).

This sequence belongs to the SmpB family.

It is found in the cytoplasm. Required for rescue of stalled ribosomes mediated by trans-translation. Binds to transfer-messenger RNA (tmRNA), required for stable association of tmRNA with ribosomes. tmRNA and SmpB together mimic tRNA shape, replacing the anticodon stem-loop with SmpB. tmRNA is encoded by the ssrA gene; the 2 termini fold to resemble tRNA(Ala) and it encodes a 'tag peptide', a short internal open reading frame. During trans-translation Ala-aminoacylated tmRNA acts like a tRNA, entering the A-site of stalled ribosomes, displacing the stalled mRNA. The ribosome then switches to translate the ORF on the tmRNA; the nascent peptide is terminated with the 'tag peptide' encoded by the tmRNA and targeted for degradation. The ribosome is freed to recommence translation, which seems to be the essential function of trans-translation. This chain is SsrA-binding protein, found in Sulfurihydrogenibium sp. (strain YO3AOP1).